The following is a 480-amino-acid chain: uncharacterized protein (480 aa).

N6-(pyridoxal phosphate)lysine is present on Lys-222.

It belongs to the Orn/Lys/Arg decarboxylase class-I family. Pyridoxal 5'-phosphate serves as cofactor.

This is an uncharacterized protein from Bacillus subtilis (strain 168).